The following is a 117-amino-acid chain: MKHLWFFLLLVAAPRWVLSQVQLQESGPGLVKPSGTLSLTCAVSGGSISSSNWWSWVRQPPGKGLEWIGEIYHSGSTNYNPSLKSRVTISVDKSKNQFSLKLSSVTAADTAVYYCAR.

The signal sequence occupies residues 1–19 (MKHLWFFLLLVAAPRWVLS). The framework-1 stretch occupies residues 20–44 (QVQLQESGPGLVKPSGTLSLTCAVS). The 98-residue stretch at 20 to 117 (QVQLQESGPG…ADTAVYYCAR (98 aa)) folds into the Ig-like domain. An intrachain disulfide couples Cys41 to Cys115. The tract at residues 45–53 (GGSISSSNW) is complementarity-determining-1. A framework-2 region spans residues 54–70 (WSWVRQPPGKGLEWIGE). Positions 71–77 (IYHSGST) are complementarity-determining-2. The framework-3 stretch occupies residues 78–115 (NYNPSLKSRVTISVDKSKNQFSLKLSSVTAADTAVYYC). Positions 116 to 117 (AR) are complementarity-determining-3.

Immunoglobulins are composed of two identical heavy chains and two identical light chains; disulfide-linked.

It localises to the secreted. Its subcellular location is the cell membrane. Functionally, v region of the variable domain of immunoglobulin heavy chains that participates in the antigen recognition. Immunoglobulins, also known as antibodies, are membrane-bound or secreted glycoproteins produced by B lymphocytes. In the recognition phase of humoral immunity, the membrane-bound immunoglobulins serve as receptors which, upon binding of a specific antigen, trigger the clonal expansion and differentiation of B lymphocytes into immunoglobulins-secreting plasma cells. Secreted immunoglobulins mediate the effector phase of humoral immunity, which results in the elimination of bound antigens. The antigen binding site is formed by the variable domain of one heavy chain, together with that of its associated light chain. Thus, each immunoglobulin has two antigen binding sites with remarkable affinity for a particular antigen. The variable domains are assembled by a process called V-(D)-J rearrangement and can then be subjected to somatic hypermutations which, after exposure to antigen and selection, allow affinity maturation for a particular antigen. This chain is Immunoglobulin heavy variable 4-4, found in Homo sapiens (Human).